Reading from the N-terminus, the 205-residue chain is Large ribosomal subunit protein uL4 (205 aa).

The tract at residues 45-97 (RQGTSAVKNRSAVRGGGKKPWRQKGTGRARQGSIRAPQWRGGGTVFGPTPRSY) is disordered. Residues 60–71 (GGKKPWRQKGTG) are compositionally biased toward basic residues.

It belongs to the universal ribosomal protein uL4 family. In terms of assembly, part of the 50S ribosomal subunit.

One of the primary rRNA binding proteins, this protein initially binds near the 5'-end of the 23S rRNA. It is important during the early stages of 50S assembly. It makes multiple contacts with different domains of the 23S rRNA in the assembled 50S subunit and ribosome. Functionally, forms part of the polypeptide exit tunnel. The sequence is that of Large ribosomal subunit protein uL4 from Lactobacillus gasseri (strain ATCC 33323 / DSM 20243 / BCRC 14619 / CIP 102991 / JCM 1131 / KCTC 3163 / NCIMB 11718 / NCTC 13722 / AM63).